The following is a 556-amino-acid chain: PPE family protein PPE2 (556 aa).

The PPE stretch occupies residues 8-164 (ASPPEVHSAL…ASYQAVSTAA (157 aa)). The SH3-like stretch occupies residues 201-256 (QKIGYTDFYNNVIQPFINWLTNLPFLQAMFSGFDPWLPSLGNPLTFLSPANIAFAL). Positions 319–340 (LEQTLALLPAALPLLAAPLAPL) are leucine zipper motif. Disordered stretches follow at residues 385-418 (TPTPAPAPAPTAVTAPTPPLGPPPPPVTAPPPVT) and 443-556 (GTGV…TRVE). Residues 400–417 (PTPPLGPPPPPVTAPPPV) are compositionally biased toward pro residues. Low complexity predominate over residues 456-471 (AEAPASAAAPEEQVQP). Residues 472–481 (QRRRRPKIKQ) show a composition bias toward basic residues. The short motif at 473-481 (RRRRPKIKQ) is the Nuclear localization signal element.

This sequence belongs to the mycobacterial PPE family.

Its subcellular location is the secreted. The protein resides in the host cytoplasm. It is found in the host nucleus. Inhibits nitric oxide (NO) production in activated macrophages. Acts by inhibiting expression of the host inducible nitric oxide synthase (iNOS). PPE2 is translocated into the host macrophage nucleus, where it interacts with a GATA-binding site overlapping with the TATA box of NOS2 (iNOS) promoter, and strongly inhibits NOS2 gene transcription. Reduction in NO production in turn facilitates intracellular survival of the bacilli inside the macrophage. In addition, disrupts the assembly of NADPH oxidase complex, which inhibits NADPH oxidase-mediated reactive oxygen species (ROS) generation in macrophages and favors M.tuberculosis survival. Acts by interacting with NCF2, the cytosolic subunit of NADPH oxidase, and preventing translocation of NCF2 and NCF1 to the membrane, which causes a reduction of the functional assembly of NADPH oxidase complex and a decrease in NADPH oxidase activity. The polypeptide is PPE family protein PPE2 (PPE2) (Mycobacterium tuberculosis (strain CDC 1551 / Oshkosh)).